We begin with the raw amino-acid sequence, 96 residues long: Large ribosomal subunit protein uL23 (96 aa).

The protein belongs to the universal ribosomal protein uL23 family. As to quaternary structure, part of the 50S ribosomal subunit. Contacts protein L29, and trigger factor when it is bound to the ribosome.

Its function is as follows. One of the early assembly proteins it binds 23S rRNA. One of the proteins that surrounds the polypeptide exit tunnel on the outside of the ribosome. Forms the main docking site for trigger factor binding to the ribosome. The protein is Large ribosomal subunit protein uL23 of Oleidesulfovibrio alaskensis (strain ATCC BAA-1058 / DSM 17464 / G20) (Desulfovibrio alaskensis).